The chain runs to 676 residues: Cysteine-rich receptor-like protein kinase 4 (676 aa).

The signal sequence occupies residues 1–16; the sequence is MSFFWLFPFLLHLSFA. The Extracellular segment spans residues 17 to 287; sequence DSLSPLSAPV…ISERGKGRNS (271 aa). Gnk2-homologous domains follow at residues 31 to 135 and 146 to 246; these read HLNH…HRNI and ILLN…NYSF. N-linked (GlcNAc...) asparagine glycosylation is found at N33, N46, N64, N152, N181, N243, and N248. The segment at 252 to 279 is disordered; it reads TRSSSPPSLPPRSTPQQQLKLAPPPLIS. A glycan (N-linked (GlcNAc...) asparagine) is linked at N286. The chain crosses the membrane as a helical span at residues 288 to 308; that stretch reads SVIIVVVVPIIALLLLFVAFF. Residues 309-676 are Cytoplasmic-facing; the sequence is SLRAKKTRTN…DASITNVTPR (368 aa). A Protein kinase domain is found at 351-631; sequence FCETNKLGQG…QMLTTSSIAL (281 aa). ATP is bound by residues 357–365 and K379; that span reads LGQGGFGEV. Phosphotyrosine is present on Y424. Residue D476 is the Proton acceptor of the active site. Residue T516 is modified to Phosphothreonine. Y524 carries the phosphotyrosine modification.

The protein belongs to the protein kinase superfamily. Ser/Thr protein kinase family. CRK subfamily.

It is found in the membrane. It carries out the reaction L-seryl-[protein] + ATP = O-phospho-L-seryl-[protein] + ADP + H(+). It catalyses the reaction L-threonyl-[protein] + ATP = O-phospho-L-threonyl-[protein] + ADP + H(+). The sequence is that of Cysteine-rich receptor-like protein kinase 4 (CRK4) from Arabidopsis thaliana (Mouse-ear cress).